A 449-amino-acid chain; its full sequence is Glucose-6-phosphate isomerase (449 aa).

The active-site Proton donor is E291. Catalysis depends on residues H312 and K426.

Belongs to the GPI family.

Its subcellular location is the cytoplasm. It catalyses the reaction alpha-D-glucose 6-phosphate = beta-D-fructose 6-phosphate. It functions in the pathway carbohydrate biosynthesis; gluconeogenesis. The protein operates within carbohydrate degradation; glycolysis; D-glyceraldehyde 3-phosphate and glycerone phosphate from D-glucose: step 2/4. Functionally, catalyzes the reversible isomerization of glucose-6-phosphate to fructose-6-phosphate. This is Glucose-6-phosphate isomerase from Streptococcus pyogenes serotype M1.